A 111-amino-acid chain; its full sequence is Ig kappa chain V-III region PC 2880/PC 1229 (111 aa).

A framework-1 region spans residues 1 to 23; sequence DIVLTQSPASLAVSLGQRATISC. A disulfide bond links Cys-23 and Cys-92. The segment at 24–38 is complementarity-determining-1; it reads RASESVDNYGISFMN. The framework-2 stretch occupies residues 39–53; it reads WFQQKPGQPPKLLIY. Residues 54–60 are complementarity-determining-2; the sequence is AASNQGS. A framework-3 region spans residues 61 to 92; sequence GVPARFSGSGSGTDFSLNIHPMEEDDTAMYFC. Positions 93–101 are complementarity-determining-3; the sequence is QQSKEVPWT. The tract at residues 102 to 111 is framework-4; the sequence is FGGGTKLEIK.

This chain is Ig kappa chain V-III region PC 2880/PC 1229, found in Mus musculus (Mouse).